The sequence spans 127 residues: F420-non-reducing hydrogenase subunit G (127 aa).

Belongs to the [NiFe]/[NiFeSe] hydrogenase small subunit family. The F420-non-reducing hydrogenase is composed of three subunits; MvhA, MvhD and MvhG. It forms a complex with the heterodisulfide reductase (hdr).

Functionally, part of a complex that provides reducing equivalents for heterodisulfide reductase. This chain is F420-non-reducing hydrogenase subunit G (mvhG), found in Methanothermus fervidus.